A 318-amino-acid chain; its full sequence is Cyclic AMP receptor-like protein F (318 aa).

The Extracellular portion of the chain corresponds to 1–3; the sequence is MKD. The chain crosses the membrane as a helical span at residues 4-24; that stretch reads IILIYMICAPISMIGSLFIII. The Cytoplasmic portion of the chain corresponds to 25-38; sequence TWLLYAKLKNSGSN. The chain crosses the membrane as a helical span at residues 39 to 59; it reads FIFFQAISDFFFTSKYIITII. Residues 60-83 are Extracellular-facing; sequence FYYINIPQFSDETSSTDTNPYCFS. A disulfide bond links Cys81 and Cys177. Residues 84-104 form a helical membrane-spanning segment; sequence LGLFSQFFGQATIMWSYTMTV. At 105–145 the chain is on the cytoplasmic side; that stretch reads KVFHSYFEMKKKNNNNNIGSNNIGGGGGGNNSNKQNSIDKT. The helical transmembrane segment at 146-166 threads the bilayer; it reads LKWYHLFVWGFCLVNATIIGI. The Extracellular portion of the chain corresponds to 167–187; the sequence is SKQYGPSSTGCWIVGANNPYR. The helical transmembrane segment at 188-208 threads the bilayer; the sequence is FFELVPLYFTITTSIIILILI. At 209–234 the chain is on the cytoplasmic side; that stretch reads LVKMKKSKPSSLLPTESMRYNQQARE. A helical transmembrane segment spans residues 235–255; it reads FKIQLMKFVLIFIIFWLPATV. The Extracellular segment spans residues 256-267; that stretch reads LRTLEYFGIEKT. The helical transmembrane segment at 268-288 threads the bilayer; that stretch reads FFILLDAVSVSLQALANSLVW. Residues 289–318 lie on the Cytoplasmic side of the membrane; it reads ATSPQFLKLMKRKVVNKPNKQMEREYLINK.

The protein belongs to the G-protein coupled receptor 5 family.

The protein resides in the membrane. Receptor for cAMP. The sequence is that of Cyclic AMP receptor-like protein F (crlF) from Dictyostelium discoideum (Social amoeba).